Here is a 252-residue protein sequence, read N- to C-terminus: Glucosamine-6-phosphate deaminase (252 aa).

Aspartate 67 acts as the Proton acceptor; for enolization step in catalysis. The active-site For ring-opening step is the asparagine 137. Residue histidine 139 is the Proton acceptor; for ring-opening step of the active site. The active-site For ring-opening step is glutamate 144.

This sequence belongs to the glucosamine/galactosamine-6-phosphate isomerase family. NagB subfamily.

It carries out the reaction alpha-D-glucosamine 6-phosphate + H2O = beta-D-fructose 6-phosphate + NH4(+). The protein operates within amino-sugar metabolism; N-acetylneuraminate degradation; D-fructose 6-phosphate from N-acetylneuraminate: step 5/5. Its function is as follows. Catalyzes the reversible isomerization-deamination of glucosamine 6-phosphate (GlcN6P) to form fructose 6-phosphate (Fru6P) and ammonium ion. This is Glucosamine-6-phosphate deaminase from Staphylococcus aureus (strain Mu3 / ATCC 700698).